The following is a 142-amino-acid chain: MFKDLEKARPGTRRDLPAVLAALPWNAQGLLPAIAQQHDSGEVLMMAWMNREALEETLRTGRVCYYSRSRRSLWRKGESSGQVQRLVELRLDCDGDTLLLRVDQTGPACHTGRRSCFYNRLDGDGLEVIAAPEIDPETLYHR.

Aspartate 92 is a binding site for Mg(2+). Cysteine 93 contributes to the Zn(2+) binding site. Residues aspartate 94 and aspartate 96 each contribute to the Mg(2+) site. 2 residues coordinate Zn(2+): cysteine 109 and cysteine 116.

The protein belongs to the PRA-CH family. As to quaternary structure, homodimer. Mg(2+) serves as cofactor. Zn(2+) is required as a cofactor.

It localises to the cytoplasm. It catalyses the reaction 1-(5-phospho-beta-D-ribosyl)-5'-AMP + H2O = 1-(5-phospho-beta-D-ribosyl)-5-[(5-phospho-beta-D-ribosylamino)methylideneamino]imidazole-4-carboxamide. Its pathway is amino-acid biosynthesis; L-histidine biosynthesis; L-histidine from 5-phospho-alpha-D-ribose 1-diphosphate: step 3/9. In terms of biological role, catalyzes the hydrolysis of the adenine ring of phosphoribosyl-AMP. The chain is Phosphoribosyl-AMP cyclohydrolase from Alkalilimnicola ehrlichii (strain ATCC BAA-1101 / DSM 17681 / MLHE-1).